The chain runs to 1602 residues: Calmodulin-regulated spectrin-associated protein 1 (1602 aa).

A Calponin-homology (CH) domain is found at 216-331 (ESPAHQKVRY…FIAELFWWFE (116 aa)). Phosphoserine occurs at positions 217, 371, 375, 416, and 431. A disordered region spans residues 426 to 471 (QKQQKSIQGEDIPDQRHRSNSLTRVDGQPRGAAIAWPEKKTRPASQ). Residue Thr512 is modified to Phosphothreonine. Ser563, Ser575, and Ser589 each carry phosphoserine. The span at 603–620 (AKEKQVITKEDERGEGRP) shows a compositional bias: basic and acidic residues. The tract at residues 603 to 637 (AKEKQVITKEDERGEGRPRSIVSRRPSEGPQPLVR) is disordered. A phosphoserine mark is found at Ser629, Ser722, Ser728, Ser738, and Ser740. Residues 772–789 (KLQEDMKVKEHEDKDDAS) are compositionally biased toward basic and acidic residues. Disordered stretches follow at residues 772–808 (KLQE…VSMA) and 825–870 (LNSC…GKDP). 2 stretches are compositionally biased toward low complexity: residues 797–808 (STASQMSSVSMA) and 830–841 (TKSSTSSSQKTT). The span at 857 to 869 (QKREQSPSQHGKD) shows a compositional bias: basic and acidic residues. The interval 871–892 (ASLLASELVQLHMQLEEKRRAI) is sufficient for interaction with SPTBN1. Coiled coils occupy residues 873–909 (LLAS…QRLK) and 1016–1048 (DVNE…QEQL). The interval 903-922 (SARQRLKLGKAAFLHVVKKG) is sufficient for interaction with calmodulin. Disordered stretches follow at residues 1075 to 1165 (FVEP…GKCL), 1206 to 1226 (KEVG…VEEP), and 1301 to 1448 (ARVR…DWET). Phosphoserine is present on Ser1080. A compositionally biased stretch (basic and acidic residues) spans 1103-1114 (RPAELKVPKDRP). Over residues 1115–1127 (QGSSRSKTPTPSV) the composition is skewed to polar residues. Low complexity predominate over residues 1206–1220 (KEVGSSSSDVSGKES). Residues 1291–1343 (LLKQQRKAEEARVRKQQLEAEVELKRDEARRKAEEDRVRKEEEKARRELIKQE) adopt a coiled-coil conformation. Basic and acidic residues predominate over residues 1301–1346 (ARVRKQQLEAEVELKRDEARRKAEEDRVRKEEEKARRELIKQEYLR). Residues 1361–1372 (PKSKPKKPRPKS) show a composition bias toward basic residues. Polar residues predominate over residues 1380-1392 (SDSGTKCSSTPDN). Residues 1393-1410 (LSRTQSGSSLSLASAATT) are compositionally biased toward low complexity. Phosphoserine is present on residues Ser1398 and Ser1427. Residues 1463–1597 (GPKLFKEPSS…QPKRPAVPKK (135 aa)) enclose the CKK domain. Position 1537 is a phosphotyrosine (Tyr1537).

It belongs to the CAMSAP1 family. Interacts with spectrin via SPTBN1; the interaction is direct. Interacts with calmodulin; calcium-dependent it prevents interaction with spectrin.

It localises to the cytoplasm. The protein resides in the cytoskeleton. Its function is as follows. Key microtubule-organizing protein that specifically binds the minus-end of non-centrosomal microtubules and regulates their dynamics and organization. Specifically recognizes growing microtubule minus-ends and stabilizes microtubules. Acts on free microtubule minus-ends that are not capped by microtubule-nucleating proteins or other factors and protects microtubule minus-ends from depolymerization. In contrast to CAMSAP2 and CAMSAP3, tracks along the growing tips of minus-end microtubules without significantly affecting the polymerization rate: binds at the very tip of the microtubules minus-end and acts as a minus-end tracking protein (-TIP) that dissociates from microtubules after allowing tubulin incorporation. Through interaction with spectrin may regulate neurite outgrowth. This Homo sapiens (Human) protein is Calmodulin-regulated spectrin-associated protein 1 (CAMSAP1).